An 84-amino-acid chain; its full sequence is MAHKKAGGSTRNGRDSNPKYLGVKRYGGEFVKAGTIILRQRGTKTHPGVNVGCGKDHTLFALKDGTVKFHVGGALNRKFVSIDE.

The tract at residues 1–20 (MAHKKAGGSTRNGRDSNPKY) is disordered.

The protein belongs to the bacterial ribosomal protein bL27 family.

This Francisella philomiragia subsp. philomiragia (strain ATCC 25017 / CCUG 19701 / FSC 153 / O#319-036) protein is Large ribosomal subunit protein bL27.